The sequence spans 259 residues: Small ribosomal subunit protein uS2 (259 aa).

The segment at Gly224–Asp259 is disordered. Over residues Asp238–Leu248 the composition is skewed to acidic residues. Positions Asp250–Asp259 are enriched in polar residues.

It belongs to the universal ribosomal protein uS2 family.

This Limosilactobacillus fermentum (strain NBRC 3956 / LMG 18251) (Lactobacillus fermentum) protein is Small ribosomal subunit protein uS2.